The primary structure comprises 83 residues: Colicin-E5 immunity protein in ColE9 (83 aa).

This Escherichia coli protein is Colicin-E5 immunity protein in ColE9.